The primary structure comprises 1347 residues: Neurofascin (1347 aa).

A signal peptide spans 1 to 24; that stretch reads MARQPPPPWVHAAFLLCLLSLGGA. Topologically, residues 25 to 1217 are extracellular; it reads IEIPMDPSIQ…NQADIATQGW (1193 aa). 6 Ig-like C2-type domains span residues 41-137, 143-230, 244-332, 337-424, 429-517, and 521-603; these read PTIT…LQVS, PKEN…NPFT, PSFM…ISVR, PYWL…AFVS, PPRM…VRLE, and PTRI…QDLA. Intrachain disulfides connect Cys63-Cys118, Cys162-Cys213, Cys268-Cys316, and Cys358-Cys408. Residue Asn305 is glycosylated (N-linked (GlcNAc...) asparagine). N-linked (GlcNAc...) asparagine glycosylation is found at Asn409 and Asn446. Disulfide bonds link Cys452–Cys501 and Cys543–Cys592. Tyr481 carries the post-translational modification Phosphotyrosine. Residue Asn483 is glycosylated (N-linked (GlcNAc...) asparagine). Ser485 carries the post-translational modification Phosphoserine. 4 Fibronectin type-III domains span residues 630 to 725, 730 to 823, 828 to 930, and 934 to 1030; these read RPRD…TSGA, NPGD…SGED, APTE…TPEG, and APRR…PNEA. The tract at residues 713 to 740 is disordered; that stretch reads PSLPSERYRTSGAPPESNPGDVKGEGTR. N-linked (GlcNAc...) asparagine glycans are attached at residues Asn752 and Asn778. The tract at residues 915-934 is disordered; the sequence is GDGPRSETKEFTTPEGVPSA. A compositionally biased stretch (basic and acidic residues) spans 916–926; the sequence is DGPRSETKEFT. N-linked (GlcNAc...) asparagine glycosylation is found at Asn973 and Asn988. Disordered regions lie at residues 1011–1040 and 1090–1111; these read TQVG…PTLP and TTAA…TKIH. Residues 1024 to 1040 show a composition bias toward pro residues; that stretch reads PAPPNEATPTAAPPTLP. A compositionally biased stretch (low complexity) spans 1090-1105; the sequence is TTAAATTTTESPPTTT. Positions 1114-1206 constitute a Fibronectin type-III 5 domain; sequence APDEQSIWNV…ITFMTSTAYT (93 aa). Residues 1218–1238 traverse the membrane as a helical segment; it reads FIGLMCAIALLVLILLIVCFI. The Cytoplasmic segment spans residues 1239–1347; that stretch reads KRSRGGKYPV…SPVNAIYSLA (109 aa). A disordered region spans residues 1248–1347; it reads VREKKDVPLG…SPVNAIYSLA (100 aa). The span at 1261–1272 shows a compositional bias: acidic residues; that stretch reads PKEEDGSFDYSD. Phosphoserine occurs at positions 1267, 1281, 1294, 1297, 1333, 1334, and 1338. Over residues 1278 to 1291 the composition is skewed to polar residues; that stretch reads LQGSQTSLDGTIKQ.

This sequence belongs to the immunoglobulin superfamily. L1/neurofascin/NgCAM family. As to quaternary structure, horseshoe-shaped homodimer. Probable constituent of a NFASC/NRCAM/ankyrin-G complex. Associates with the sodium channel beta-1 (SCN1B) and beta-3 (SCN3B) subunits. Interacts with GLDN/gliomedin. Interacts with MYOC.

It localises to the cell membrane. Its subcellular location is the cell junction. The protein localises to the paranodal septate junction. Its function is as follows. Cell adhesion, ankyrin-binding protein which may be involved in neurite extension, axonal guidance, synaptogenesis, myelination and neuron-glial cell interactions. The sequence is that of Neurofascin (NFASC) from Homo sapiens (Human).